Reading from the N-terminus, the 181-residue chain is Beta-lactoglobulin-2 (181 aa).

An N-terminal signal peptide occupies residues 1-18 (MKCLLLALGLSLMCGNQA). 2 disulfides stabilise this stretch: Cys84-Cys179 and Cys124-Cys138.

This sequence belongs to the calycin superfamily. Lipocalin family. Monomer.

It localises to the secreted. Functionally, lactoglobulin is the primary component of whey, it binds retinol and is probably involved in the transport of that molecule. The sequence is that of Beta-lactoglobulin-2 (LGB2) from Equus caballus (Horse).